Consider the following 385-residue polypeptide: MAEGKMMSDFLPFSRPAMGAEELAAVKTVLDSGWITTGPKNQELEAAFCRLTGNQYAVAVSSATAGMHIALMALGIGEGDEVITPSMTWVSTLNMIVLLGANPVMVDVDRDTLMVTPEHIEAAITPQTKAIIPVHYAGAPADLDAIYALGERYGIPVIEDAAHATGTSYKGRHIGARGTAIFSFHAIKNITCAEGGIVVTDNPQFADKLRSLKFHGLGVDAWDRQSGGRAPQAEVLAPGYKYNLPDLNAAIALAQLQKLDALNARRAAIAAQYHQAMADLPFQPLSLPSWEHIHAWHLFIIRVDEARCGITRDALMASLKTKGIGTGLHFRAAHTQKYYRERFPTLTLPDTEWNSERICSLPLFPDMTESDFDRVITALHQIAGQ.

Catalysis depends on K188, which acts as the Proton acceptor. N6-(pyridoxal phosphate)lysine is present on K188.

The protein belongs to the DegT/DnrJ/EryC1 family. ArnB subfamily. Homodimer. Requires pyridoxal 5'-phosphate as cofactor.

The catalysed reaction is UDP-4-amino-4-deoxy-beta-L-arabinose + 2-oxoglutarate = UDP-beta-L-threo-pentopyranos-4-ulose + L-glutamate. The protein operates within nucleotide-sugar biosynthesis; UDP-4-deoxy-4-formamido-beta-L-arabinose biosynthesis; UDP-4-deoxy-4-formamido-beta-L-arabinose from UDP-alpha-D-glucuronate: step 2/3. It participates in bacterial outer membrane biogenesis; lipopolysaccharide biosynthesis. Inhibited by L-cycloserine. Catalyzes the conversion of UDP-4-keto-arabinose (UDP-Ara4O) to UDP-4-amino-4-deoxy-L-arabinose (UDP-L-Ara4N). The modified arabinose is attached to lipid A and is required for resistance to polymyxin and cationic antimicrobial peptides. In Salmonella typhimurium (strain LT2 / SGSC1412 / ATCC 700720), this protein is UDP-4-amino-4-deoxy-L-arabinose--oxoglutarate aminotransferase (arnB).